Consider the following 101-residue polypeptide: uncharacterized protein (101 aa).

Low complexity predominate over residues 65–79 (QEAAAPAGPQEPAEA). The segment at 65–101 (QEAAAPAGPQEPAEASGDAGKKEEVEEEEIEIDFGMF) is disordered. Residues 89–101 (VEEEEIEIDFGMF) are compositionally biased toward acidic residues.

This is an uncharacterized protein from Encephalitozoon cuniculi (strain GB-M1) (Microsporidian parasite).